A 504-amino-acid chain; its full sequence is Anaerobic nitric oxide reductase transcription regulator NorR (504 aa).

Asp-57 carries the 4-aspartylphosphate modification. Residues 187-416 (MIGLSPGMTQ…LEHAIHRAVV (230 aa)) form the Sigma-54 factor interaction domain. Residues 215 to 222 (GETGTGKE) and 278 to 287 (ADNGTLFLDE) contribute to the ATP site. A DNA-binding region (H-T-H motif) is located at residues 479 to 498 (WAASARMLETDVANLHRLAK).

It participates in nitrogen metabolism; nitric oxide reduction. Its function is as follows. Required for the expression of anaerobic nitric oxide (NO) reductase, acts as a transcriptional activator for at least the norVW operon. Activation also requires sigma-54. This chain is Anaerobic nitric oxide reductase transcription regulator NorR, found in Escherichia coli O7:K1 (strain IAI39 / ExPEC).